The primary structure comprises 145 residues: Large ribosomal subunit protein uL15 (145 aa).

Residues 1–50 (MRLNTLSPAAGSKPEKQRRGRGIGSGLGKTGGRGVKGQTSRSGGGKVRAG) form a disordered region. Positions 22–35 (GIGSGLGKTGGRGV) are enriched in gly residues.

The protein belongs to the universal ribosomal protein uL15 family. In terms of assembly, part of the 50S ribosomal subunit.

In terms of biological role, binds to the 23S rRNA. The protein is Large ribosomal subunit protein uL15 of Aeromonas salmonicida (strain A449).